Here is a 209-residue protein sequence, read N- to C-terminus: Kynurenine formamidase (209 aa).

Residue Phe-18 participates in substrate binding. Positions 48, 52, and 54 each coordinate Zn(2+). His-58 serves as the catalytic Proton donor/acceptor. Zn(2+) is bound by residues His-160 and Glu-172.

This sequence belongs to the Cyclase 1 superfamily. KynB family. Homodimer. The cofactor is Zn(2+).

It catalyses the reaction N-formyl-L-kynurenine + H2O = L-kynurenine + formate + H(+). Its pathway is amino-acid degradation; L-tryptophan degradation via kynurenine pathway; L-kynurenine from L-tryptophan: step 2/2. Functionally, catalyzes the hydrolysis of N-formyl-L-kynurenine to L-kynurenine, the second step in the kynurenine pathway of tryptophan degradation. The polypeptide is Kynurenine formamidase (Bordetella petrii (strain ATCC BAA-461 / DSM 12804 / CCUG 43448)).